The sequence spans 212 residues: Ras-related protein Rab-15 (212 aa).

10 residues coordinate GTP: Ser17, Gly18, Val19, Gly20, Lys21, Thr22, Cys23, Ser35, Ser39, and Thr40. Thr22 lines the Mg(2+) pocket. 2 short sequence motifs (switch) span residues 31–45 (NEFHSSHISTIGVDF) and 63–80 (DTAGQERYQTITKQYYRR). 2 residues coordinate Mg(2+): Thr40 and Asp63. Positions 66, 121, 122, 124, 151, and 152 each coordinate GTP. S-geranylgeranyl cysteine attachment occurs at residues Cys210 and Cys212. A Cysteine methyl ester modification is found at Cys212.

This sequence belongs to the small GTPase superfamily. Rab family. In terms of assembly, the GTP bound form of RAB15 interacts with REP15. Interacts (GTP-bound form) with MICAL1, MICAL3, MICALCL, EHBP1 and EHBP1L1. It depends on Mg(2+) as a cofactor. In terms of tissue distribution, expressed predominantly in neural tissues.

It localises to the cell membrane. It carries out the reaction GTP + H2O = GDP + phosphate + H(+). With respect to regulation, regulated by guanine nucleotide exchange factors (GEFs) which promote the exchange of bound GDP for free GTP. Regulated by GTPase activating proteins (GAPs) which increase the GTP hydrolysis activity. Inhibited by GDP dissociation inhibitors (GDIs). In terms of biological role, the small GTPases Rab are key regulators of intracellular membrane trafficking, from the formation of transport vesicles to their fusion with membranes. Rabs cycle between an inactive GDP-bound form and an active GTP-bound form that is able to recruit to membranes different sets of downstream effectors directly responsible for vesicle formation, movement, tethering and fusion. RAB15 may act in concert with RAB3A in regulating aspects of synaptic vesicle membrane flow within the nerve terminal. In Rattus norvegicus (Rat), this protein is Ras-related protein Rab-15.